We begin with the raw amino-acid sequence, 484 residues long: Proline--tRNA ligase (484 aa).

It belongs to the class-II aminoacyl-tRNA synthetase family. ProS type 3 subfamily. In terms of assembly, homodimer.

It is found in the cytoplasm. It carries out the reaction tRNA(Pro) + L-proline + ATP = L-prolyl-tRNA(Pro) + AMP + diphosphate. Catalyzes the attachment of proline to tRNA(Pro) in a two-step reaction: proline is first activated by ATP to form Pro-AMP and then transferred to the acceptor end of tRNA(Pro). This Haloarcula marismortui (strain ATCC 43049 / DSM 3752 / JCM 8966 / VKM B-1809) (Halobacterium marismortui) protein is Proline--tRNA ligase.